The sequence spans 82 residues: U16-lycotoxin-Ls1a (82 aa).

The N-terminal stretch at 1–22 (MSPKVQALLLLVGLITFLAVHA) is a signal peptide. Positions 23-34 (EEELSETVESER) are excised as a propeptide. Disulfide bonds link Cys-36-Cys-51, Cys-43-Cys-56, Cys-50-Cys-67, and Cys-58-Cys-65.

This sequence belongs to the neurotoxin 02 (plectoxin) family. 04 (U16-lycotoxin) subfamily. In terms of tissue distribution, expressed by the venom gland.

It is found in the secreted. The polypeptide is U16-lycotoxin-Ls1a (Lycosa singoriensis (Wolf spider)).